Consider the following 257-residue polypeptide: Indole-3-glycerol phosphate synthase (257 aa).

The protein belongs to the TrpC family.

The catalysed reaction is 1-(2-carboxyphenylamino)-1-deoxy-D-ribulose 5-phosphate + H(+) = (1S,2R)-1-C-(indol-3-yl)glycerol 3-phosphate + CO2 + H2O. It functions in the pathway amino-acid biosynthesis; L-tryptophan biosynthesis; L-tryptophan from chorismate: step 4/5. The polypeptide is Indole-3-glycerol phosphate synthase (trpC) (Aquifex aeolicus (strain VF5)).